Reading from the N-terminus, the 199-residue chain is N-(5'-phosphoribosyl)anthranilate isomerase (199 aa).

The protein belongs to the TrpF family.

The enzyme catalyses N-(5-phospho-beta-D-ribosyl)anthranilate = 1-(2-carboxyphenylamino)-1-deoxy-D-ribulose 5-phosphate. Its pathway is amino-acid biosynthesis; L-tryptophan biosynthesis; L-tryptophan from chorismate: step 3/5. In Lacticaseibacillus paracasei (strain ATCC 334 / BCRC 17002 / CCUG 31169 / CIP 107868 / KCTC 3260 / NRRL B-441) (Lactobacillus paracasei), this protein is N-(5'-phosphoribosyl)anthranilate isomerase.